We begin with the raw amino-acid sequence, 639 residues long: Sodium-dependent phosphate transport protein 2A (639 aa).

The Cytoplasmic segment spans residues Met-1–Lys-103. Phosphoserine is present on residues Ser-14 and Ser-34. The helical transmembrane segment at Val-104–Phe-125 threads the bilayer. At Gln-126 to Asn-145 the chain is on the extracellular side. A helical membrane pass occupies residues Pro-146–Ser-163. Residues Ser-164 to Thr-165 are Cytoplasmic-facing. A helical membrane pass occupies residues Ser-166–Ile-185. Residues Pro-186 to Asp-347 are Extracellular-facing. 2 cysteine pairs are disulfide-bonded: Cys-225–Cys-522 and Cys-306–Cys-336. N-linked (GlcNAc...) asparagine glycans are attached at residues Asn-298, Asn-323, and Asn-330. Residues Leu-348–Val-370 traverse the membrane as a helical segment. Topologically, residues Lys-371–Met-412 are cytoplasmic. Residues Thr-413 to Ser-436 traverse the membrane as a helical segment. At Ile-437–Lys-466 the chain is on the extracellular side. The chain crosses the membrane as a helical span at residues Leu-467–Leu-487. At Trp-488–Trp-513 the chain is on the cytoplasmic side. At Thr-508 the chain carries Phosphothreonine; by PKC. The chain crosses the membrane as a helical span at residues Phe-514–Ser-534. Residues Met-535 to Arg-539 lie on the Extracellular side of the membrane. The chain crosses the membrane as a helical span at residues Ala-540 to Leu-561. Residues Gln-562–Leu-639 lie on the Cytoplasmic side of the membrane. Ser-607 carries the phosphoserine modification. Thr-623 is modified (phosphothreonine). Ser-625 carries the phosphoserine modification.

This sequence belongs to the SLC34A transporter family. Interacts via its C-terminal region with NHERF4. Interacts with NHERF1. Interacts with TMEM174; regulates SLC34A1 internalization by PTH and FGF23.

Its subcellular location is the apical cell membrane. It localises to the cell membrane. The enzyme catalyses 3 Na(+)(out) + phosphate(out) = 3 Na(+)(in) + phosphate(in). Involved in actively transporting phosphate into cells via Na(+) cotransport in the renal brush border membrane. The cotransport has a Na(+):Pi stoichiometry of 3:1 and is electrogenic. This is Sodium-dependent phosphate transport protein 2A from Ovis aries (Sheep).